The sequence spans 1582 residues: Nik-related protein kinase (1582 aa).

Residues 25–313 (FSLDKTIGLG…SANMLQHPFV (289 aa)) enclose the Protein kinase domain. ATP is bound by residues 31–39 (IGLGTYGRI) and Lys54. The Proton acceptor role is filled by Asp177. Low complexity-rich tracts occupy residues 492–507 (QVQS…QTQT), 527–538 (PEQQRQGQAPEQ), and 551–572 (EQNQ…AQAE). The disordered stretch occupies residues 492 to 579 (QVQSQVSKKQ…QAETEAEEPE (88 aa)). Residues 725 to 759 (QRRQRRWEDIFNQHEEELRQVDKDKEDESSDNDEV) are a coiled coil. Disordered stretches follow at residues 783-859 (EVQE…PPYS) and 926-1156 (ASAD…GSGM). 3 stretches are compositionally biased toward polar residues: residues 803–814 (FSSSVPQRSLLE), 825–834 (RSSQNRQNWL), and 850–859 (RRSQSSPPYS). 2 positions are modified to phosphoserine: Ser852 and Ser855. A compositionally biased stretch (acidic residues) spans 926–944 (ASADTDGDDDDESNDTFED). Basic and acidic residues-rich tracts occupy residues 965–978 (VCKD…KFVD) and 999–1016 (GSCK…EEAY). A phosphoserine mark is found at Ser1027, Ser1031, and Ser1034. Basic and acidic residues-rich tracts occupy residues 1043 to 1061 (QEEH…EGDG) and 1125 to 1135 (PDHESDNKDIS). Residues 1136–1154 (ESSTQSDFSANHSSPSKGS) show a composition bias toward polar residues. The region spanning 1209–1552 (TSEICCGSLW…RFLCTRGDKL (344 aa)) is the CNH domain.

Belongs to the protein kinase superfamily. STE Ser/Thr protein kinase family. STE20 subfamily.

The enzyme catalyses L-seryl-[protein] + ATP = O-phospho-L-seryl-[protein] + ADP + H(+). The catalysed reaction is L-threonyl-[protein] + ATP = O-phospho-L-threonyl-[protein] + ADP + H(+). Its function is as follows. May phosphorylate cofilin-1 and induce actin polymerization through this process, during the late stages of embryogenesis. Involved in the TNF-alpha-induced signaling pathway. The polypeptide is Nik-related protein kinase (NRK) (Homo sapiens (Human)).